The primary structure comprises 147 residues: NADH-ubiquinone oxidoreductase chain 3 (147 aa).

The next 3 helical transmembrane spans lie at 6–26, 60–80, and 84–104; these read LFIL…LVFA, AICF…VGSL, and TFYS…GFVF.

Belongs to the complex I subunit 3 family.

The protein resides in the mitochondrion membrane. It carries out the reaction a ubiquinone + NADH + 5 H(+)(in) = a ubiquinol + NAD(+) + 4 H(+)(out). Its function is as follows. Core subunit of the mitochondrial membrane respiratory chain NADH dehydrogenase (Complex I) that is believed to belong to the minimal assembly required for catalysis. Complex I functions in the transfer of electrons from NADH to the respiratory chain. The immediate electron acceptor for the enzyme is believed to be ubiquinone. This chain is NADH-ubiquinone oxidoreductase chain 3 (ndh-3), found in Neurospora crassa (strain ATCC 24698 / 74-OR23-1A / CBS 708.71 / DSM 1257 / FGSC 987).